Reading from the N-terminus, the 1428-residue chain is Vacuolar protein sorting-associated protein 8 homolog (1428 aa).

Serine 26, serine 32, and serine 127 each carry phosphoserine. Residues 195–236 form a WD repeat; sequence VGGQYGAISALSINNDCSRLLCGFAKGQITMWDLASGKLLRS. Residues 1258-1310 form an RING-type; atypical zinc finger; that stretch reads CSICLQQYKRRQEMADEIIVFSCGHLYHSFCLQNKECTVEFEGQTRWTCYKCS. Residues 1330–1356 are disordered; the sequence is ITPSQVKMSPSYHQSKGDPTAKKGTSE. A compositionally biased stretch (polar residues) spans 1331–1343; the sequence is TPSQVKMSPSYHQ. Residues 1344-1354 are compositionally biased toward basic and acidic residues; sequence SKGDPTAKKGT.

It belongs to the VPS8 family. In terms of assembly, interacts with RAB5C. Interacts with TGFBRAP1. Component of the putative class C core vacuole/endosome tethering (CORVET) complex; the core of which composed of the class C Vps proteins VPS11, VPS16, VPS18 and VPS33A, is associated with VPS8 and TGFBRAP1.

It localises to the early endosome. In terms of biological role, plays a role in vesicle-mediated protein trafficking of the endocytic membrane transport pathway. Believed to act as a component of the putative CORVET endosomal tethering complexes which is proposed to be involved in the Rab5-to-Rab7 endosome conversion probably implicating MON1A/B, and via binding SNAREs and SNARE complexes to mediate tethering and docking events during SNARE-mediated membrane fusion. The CORVET complex is proposed to function as a Rab5 effector to mediate early endosome fusion probably in specific endosome subpopulations. Functions predominantly in APPL1-containing endosomes. This Homo sapiens (Human) protein is Vacuolar protein sorting-associated protein 8 homolog (VPS8).